The chain runs to 95 residues: MQITKTAVAGTLESSDVQIRIAPSTTMDIEINSSVAKQFGEDILNSVTAVLAQFEVSSAQIIIEDKGALDCVLRARLKAALLRATDEALAWEKIL.

Position 14 is an O-(phosphoribosyl dephospho-coenzyme A)serine (S14).

Belongs to the CitD family. As to quaternary structure, oligomer with a subunit composition of (alpha,beta,gamma)6.

The protein resides in the cytoplasm. Covalent carrier of the coenzyme of citrate lyase. In Haemophilus ducreyi (strain 35000HP / ATCC 700724), this protein is Citrate lyase acyl carrier protein.